Here is a 305-residue protein sequence, read N- to C-terminus: 4-diphosphocytidyl-2-C-methyl-D-erythritol kinase (305 aa).

The active site involves K18. 103–113 is a binding site for ATP; the sequence is PYGAGLGGGSS. D145 is an active-site residue.

Belongs to the GHMP kinase family. IspE subfamily.

It catalyses the reaction 4-CDP-2-C-methyl-D-erythritol + ATP = 4-CDP-2-C-methyl-D-erythritol 2-phosphate + ADP + H(+). The protein operates within isoprenoid biosynthesis; isopentenyl diphosphate biosynthesis via DXP pathway; isopentenyl diphosphate from 1-deoxy-D-xylulose 5-phosphate: step 3/6. Catalyzes the phosphorylation of the position 2 hydroxy group of 4-diphosphocytidyl-2C-methyl-D-erythritol. In Lawsonia intracellularis (strain PHE/MN1-00), this protein is 4-diphosphocytidyl-2-C-methyl-D-erythritol kinase.